The chain runs to 352 residues: Photosystem II D2 protein (352 aa).

At Thr2 the chain carries N-acetylthreonine. Position 2 is a phosphothreonine (Thr2). A helical membrane pass occupies residues 40–60; sequence TAYLALGGWFTGTTFVTSWYT. His117 serves as a coordination point for chlorophyll a. The chain crosses the membrane as a helical span at residues 124–140; the sequence is GFMLRQFEIARSVKIRP. Pheophytin a is bound by residues Gln129 and Asn142. A helical transmembrane segment spans residues 152-165; it reads VFVSVFLIYPLGQS. His197 provides a ligand contact to chlorophyll a. The helical transmembrane segment at 207–227 threads the bilayer; the sequence is AALLCAIHGATVENTLFEDGD. A plastoquinone is bound by residues His214 and Phe261. His214 is a binding site for Fe cation. Residue His268 participates in Fe cation binding. The chain crosses the membrane as a helical span at residues 278-294; that stretch reads GLWMSAIGVVGLALNLR.

It belongs to the reaction center PufL/M/PsbA/D family. As to quaternary structure, PSII is composed of 1 copy each of membrane proteins PsbA, PsbB, PsbC, PsbD, PsbE, PsbF, PsbH, PsbI, PsbJ, PsbK, PsbL, PsbM, PsbT, PsbX, PsbY, PsbZ, Psb30/Ycf12, at least 3 peripheral proteins of the oxygen-evolving complex and a large number of cofactors. It forms dimeric complexes. It depends on The D1/D2 heterodimer binds P680, chlorophylls that are the primary electron donor of PSII, and subsequent electron acceptors. It shares a non-heme iron and each subunit binds pheophytin, quinone, additional chlorophylls, carotenoids and lipids. There is also a Cl(-1) ion associated with D1 and D2, which is required for oxygen evolution. The PSII complex binds additional chlorophylls, carotenoids and specific lipids. as a cofactor.

It is found in the plastid. The protein resides in the chloroplast thylakoid membrane. It carries out the reaction 2 a plastoquinone + 4 hnu + 2 H2O = 2 a plastoquinol + O2. Its function is as follows. Photosystem II (PSII) is a light-driven water:plastoquinone oxidoreductase that uses light energy to abstract electrons from H(2)O, generating O(2) and a proton gradient subsequently used for ATP formation. It consists of a core antenna complex that captures photons, and an electron transfer chain that converts photonic excitation into a charge separation. The D1/D2 (PsbA/PsbD) reaction center heterodimer binds P680, the primary electron donor of PSII as well as several subsequent electron acceptors. D2 is needed for assembly of a stable PSII complex. In Chlorella vulgaris (Green alga), this protein is Photosystem II D2 protein.